The primary structure comprises 153 residues: NAD(P)H-quinone oxidoreductase subunit N (153 aa).

Belongs to the complex I NdhN subunit family. As to quaternary structure, NDH-1 can be composed of about 15 different subunits; different subcomplexes with different compositions have been identified which probably have different functions.

It localises to the cellular thylakoid membrane. It carries out the reaction a plastoquinone + NADH + (n+1) H(+)(in) = a plastoquinol + NAD(+) + n H(+)(out). It catalyses the reaction a plastoquinone + NADPH + (n+1) H(+)(in) = a plastoquinol + NADP(+) + n H(+)(out). NDH-1 shuttles electrons from an unknown electron donor, via FMN and iron-sulfur (Fe-S) centers, to quinones in the respiratory and/or the photosynthetic chain. The immediate electron acceptor for the enzyme in this species is believed to be plastoquinone. Couples the redox reaction to proton translocation, and thus conserves the redox energy in a proton gradient. Cyanobacterial NDH-1 also plays a role in inorganic carbon-concentration. The chain is NAD(P)H-quinone oxidoreductase subunit N from Synechococcus sp. (strain WH7803).